Here is a 548-residue protein sequence, read N- to C-terminus: 5-epi-aristolochene synthase (548 aa).

Positions 264, 301, 305, 441, and 444 each coordinate (2E,6E)-farnesyl diphosphate. 2 residues coordinate Mg(2+): Asp301 and Asp305. A DDXXD motif motif is present at residues 301–305; sequence DDTFD. Mg(2+)-binding residues include Asp444, Asp445, Thr448, and Glu452.

Belongs to the terpene synthase family. As to quaternary structure, monomer. Requires Mg(2+) as cofactor. In terms of processing, self-alkylated at Tyr-520 in the presence of (2Z,6E)-farnesyl diphosphate ((Z,E)-FPP). Self-alkylated at Asp-444 at warm temperature (42 degrees Celsius) in the presence of (2E,6E)-farnesyl diphosphate ((E,E)-FPP).

Its subcellular location is the cytoplasm. The catalysed reaction is (2E,6E)-farnesyl diphosphate = (+)-5-epi-aristolochene + diphosphate. It carries out the reaction (2Z,6E)-farnesyl diphosphate = (+)-2-epi-prezizaene + diphosphate. The enzyme catalyses (2Z,6E)-farnesyl diphosphate = (-)-alpha-cedrene + diphosphate. It catalyses the reaction (2Z,6E)-farnesyl diphosphate = (-)-beta-curcumene + diphosphate. Its pathway is secondary metabolite biosynthesis; terpenoid biosynthesis. Its activity is regulated as follows. Inhibited activity toward farnesyl diphosphate (FPP) by anilinogeranyl diphosphate (AGPP); AGPP undergoes a cyclization event leading to the formation of a novel macrocyclic paracyclophane alkaloid. Repressed by sesquilavandulyl diphosphate (SPP) via the induction of self-alkyation. Catalyzes the cyclization of trans,trans-farnesyl diphosphate (FPP) to the bicyclic intermediate 5-epi-aristolochene, initial step in the conversion of FPP to the sesquiterpenoid antifungal phytoalexin capsidiol. Produces germacrene A as an enzyme-bound intermediate that is not released by the enzyme, but is further cyclized to produce the bicyclic 5-epi-aristolochene. Mediates, at low levels, the formation of 4-epi-eremophilene and premnaspirodiene from trans,trans-farnesyl diphosphate. Also mediates the conversion of cis,trans-farnesyl diphosphate to cisoid minor products such as (+)-2-epi-prezizaene, (-)-alpha-cedrene and, to a lesser extent, (-)-beta-curcumene; also produces, at low levels, alpha-acoradiene and 4-epi-alpha-acoradiene, but barely nerolidol, alpha-bisabolol, epi-alpha-bisabolol and cis-farnesol. The polypeptide is 5-epi-aristolochene synthase (EAS3) (Nicotiana tabacum (Common tobacco)).